The sequence spans 1129 residues: MNSTVVVKRLQPNNGNINPRNNCSLSSMDKKNLLQKSSSYNRNRDISYALCKELNENLRVRGGLFQSESAVKARRHTLPHSSHRRSPERRNSLLFQQRPRNSSGQFTHNPNQKKDRMDNRDHKTSIKKELNNLNTMTSPEGRLSLSAKRKSEASTGSERETKRPRVDIQATSSSSILNSPPKFIRRAFLKSCNESVITIKETNSPIKPSISDNKPKLSSSLPRQLFCADSNAHSSQTTKSPTNAEPKDAMVARANKNPKAPPSQPHLRKVSPKSSMTFDSIETHFTPDNCASVAKMSKKTNGETEIIALSTNTSSSSHYKESVTGRSSPHQHDLSSTSFTEQASSCKMELDERAPMKAEQSRSPEAIPAVTVKVEGSGEHKCFPQWKDPLDIELGDDWDDELREHCVISLSSSSSSHEDEQLPSLKEILDWTVRVPVTPEKDAYSEPNTPVLKAVPEAVKTKATSYRNTLEQMLQEKEQYQRSKELERQLLESCEEDLMNLDEDENSESKGEDISLEHREILQRFSVTSCAIRDIHPGEEIFTPAKFGQLFNHQTLDLRKISVTPHNRSQQILLQARSEHVLSLISAGLLRKAYFSFPCQPEVTRWLFQMTSVHPNPIISSRIMQSLHTIALSAAQHIVEHKSQSFTVWVPSIRDITQVFLNMGASFISLFPLDVLQPPFTEGDLLEDFKPEENSQDSAISEIKDDATLPVHNLESVLSYLSLCTALCPKAYTDEELLLLLAVVCRIGLETHFQLLPTGSFSLLLQNVLKNITDWDVQISKACQILTDLSEDHHNLRRIVSILPESSRGKLLKRHLSVSIISKLLNHTCTYNPSGTDFKLSELKPFLPQMRPSSLLKSLSSARGSEDCDATLDQQAYYLCYSLLTLTNEASNFEFLPSAQRNDLRCLSSLLEKHIKCDIRESEKMLYRSKVKDFVARIYTKWQVLLTRTRPQEGMLYDYWKPPPEDELPSSPQGQTCIKAQDPQESPEEAPTPEWSSSESEEDDQSKDEEEEDWLKDPDNLQPLENQVKMEQSAEDCVEDVSDAEEESDVPKQQLEGFDISGALEDISEEELFEDDEDLLNEEEKQLLKDEEDRKHRPVEEASQQIEDLLAKHKDTLEMKDGMLLDAFI.

3 disordered regions span residues 71–178, 312–343, and 955–1057; these read VKAR…SILN, NTSS…TEQA, and MLYD…QLEG. The span at 72–87 shows a compositional bias: basic residues; that stretch reads KARRHTLPHSSHRRSP. The segment covering 93–110 has biased composition (polar residues); sequence LLFQQRPRNSSGQFTHNP. 2 stretches are compositionally biased toward basic and acidic residues: residues 112 to 130 and 149 to 166; these read QKKD…KKEL and RKSE…RPRV. 2 stretches are compositionally biased toward polar residues: residues 169-178 and 324-343; these read QATSSSSILN and TGRS…TEQA. Acidic residues-rich tracts occupy residues 999–1014 and 1033–1048; these read ESEE…EEDW and SAED…EEES.

The protein belongs to the FAM178 family.

Its subcellular location is the nucleus. In terms of biological role, plays a role in the DNA damage response (DDR) pathway by regulating postreplication repair of UV-damaged DNA and genomic stability maintenance. Promotes the recruitment of the SMC5-SMC6 complex to DNA lesions. The sequence is that of SMC5-SMC6 complex localization factor protein 2 (slf2) from Danio rerio (Zebrafish).